The primary structure comprises 185 residues: Elongation factor P (185 aa).

This sequence belongs to the elongation factor P family.

The protein resides in the cytoplasm. It participates in protein biosynthesis; polypeptide chain elongation. Its function is as follows. Involved in peptide bond synthesis. Stimulates efficient translation and peptide-bond synthesis on native or reconstituted 70S ribosomes in vitro. Probably functions indirectly by altering the affinity of the ribosome for aminoacyl-tRNA, thus increasing their reactivity as acceptors for peptidyl transferase. The protein is Elongation factor P of Pseudothermotoga lettingae (strain ATCC BAA-301 / DSM 14385 / NBRC 107922 / TMO) (Thermotoga lettingae).